Consider the following 438-residue polypeptide: Transposon Ty2-C Gag polyprotein (438 aa).

Composition is skewed to polar residues over residues 1 to 11, 19 to 39, and 49 to 60; these read MESQQLHQNPR, ASVTSKEVPSNQDPLAVSASN, and KVNSQQETTPGT. 3 disordered regions span residues 1–88, 365–397, and 419–438; these read MESQ…YQQH, NVSRTSPNTTNTKVTTRNYQRTNSSKPRAAKAH, and SSQYLSDDNELSLRPATERI. The RNA-binding stretch occupies residues 295–397; the sequence is ENNINVSDRL…SSKPRAAKAH (103 aa). Residues 369–382 are compositionally biased toward low complexity; the sequence is TSPNTTNTKVTTRN.

As to quaternary structure, homotrimer.

The protein localises to the cytoplasm. Its function is as follows. Capsid protein (CA) is the structural component of the virus-like particle (VLP), forming the shell that encapsulates the retrotransposons dimeric RNA genome. The particles are assembled from trimer-clustered units and there are holes in the capsid shells that allow for the diffusion of macromolecules. CA also has nucleocapsid-like chaperone activity, promoting primer tRNA(i)-Met annealing to the multipartite primer-binding site (PBS), dimerization of Ty2 RNA and initiation of reverse transcription. This chain is Transposon Ty2-C Gag polyprotein (TY2A-C), found in Saccharomyces cerevisiae (strain ATCC 204508 / S288c) (Baker's yeast).